The primary structure comprises 447 residues: Exodeoxyribonuclease 7 large subunit (447 aa).

It belongs to the XseA family. In terms of assembly, heterooligomer composed of large and small subunits.

Its subcellular location is the cytoplasm. It catalyses the reaction Exonucleolytic cleavage in either 5'- to 3'- or 3'- to 5'-direction to yield nucleoside 5'-phosphates.. In terms of biological role, bidirectionally degrades single-stranded DNA into large acid-insoluble oligonucleotides, which are then degraded further into small acid-soluble oligonucleotides. In Exiguobacterium sibiricum (strain DSM 17290 / CCUG 55495 / CIP 109462 / JCM 13490 / 255-15), this protein is Exodeoxyribonuclease 7 large subunit.